The following is a 302-amino-acid chain: GTP cyclohydrolase FolE2 (302 aa).

This sequence belongs to the GTP cyclohydrolase IV family.

It catalyses the reaction GTP + H2O = 7,8-dihydroneopterin 3'-triphosphate + formate + H(+). It functions in the pathway cofactor biosynthesis; 7,8-dihydroneopterin triphosphate biosynthesis; 7,8-dihydroneopterin triphosphate from GTP: step 1/1. Functionally, converts GTP to 7,8-dihydroneopterin triphosphate. This is GTP cyclohydrolase FolE2 from Pseudoalteromonas translucida (strain TAC 125).